A 304-amino-acid polypeptide reads, in one-letter code: Probable WRKY transcription factor 29 (304 aa).

Disordered stretches follow at residues 76-96 and 185-236; these read LPED…GCLL and YTNE…IPSA. Positions 78–88 are enriched in basic and acidic residues; that stretch reads EDSKPFRDDKK. The WRKY DNA-binding region spans 128 to 194; sequence KEENLLSDAW…YTNEHNHELP (67 aa). Polar residues-rich tracts occupy residues 196–213 and 225–236; these read RRNS…QPKP and SSPTSNPMIPSA.

Belongs to the WRKY group II-e family.

It localises to the nucleus. Transcription factor involved in the expression of defense genes in innate immune response of plants. Interacts specifically with the W box (5'-(T)TGAC[CT]-3'), a frequently occurring elicitor-responsive cis-acting element. Activates WRKY 22, SIRK and its own promoters. The polypeptide is Probable WRKY transcription factor 29 (WRKY29) (Arabidopsis thaliana (Mouse-ear cress)).